Reading from the N-terminus, the 319-residue chain is MDGATYQRFPKIKIRELKDDYAKFELRETDVSMANALRRVMISEVPTVAIDLVEIEVNSSVLNDEFIAHRLGLIPLTSERAMSMRFSRDCDACDGDGQCEFCSVEFRLSSKCVTDQTLDVTSRDLYSADPTVTPVDFTIDSSVSDSSEHKGIIIVKLRRGQELKLRAIARKGIGKDHAKWSPAATVTFMYEPDIIINEDMMDTLSDEEKIDLIESSPTKVFGMDPVTRQVVVVDPEAYTYDEEVIKKAEAMGKPGLIEISPKDDSFIFTVESTGAVKASQLVLNAIDLLKQKLDAVRLSDDTVEADDQFGELGAHMRGG.

Met1 is subject to N-acetylmethionine.

Belongs to the archaeal Rpo3/eukaryotic RPB3 RNA polymerase subunit family. In terms of assembly, component of the RNA polymerase II complex consisting of at least 12 subunits. Interacts with SHH1, CLSY1, NRPB11 and NRPD1. Interacts with IYO.

The protein localises to the nucleus. In terms of biological role, DNA-dependent RNA polymerase catalyzes the transcription of DNA into RNA using the four ribonucleoside triphosphates as substrates. Component of RNA polymerase II which synthesizes mRNA precursors and many functional non-coding RNAs. Pol II is the central component of the basal RNA polymerase II transcription machinery. It is composed of mobile elements that move relative to each other. NRPB3 is part of the core element with the central large cleft and the clamp element that moves to open and close the cleft. Component of RNA polymerases IV and V which mediate short-interfering RNAs (siRNA) accumulation and subsequent RNA-directed DNA methylation-dependent (RdDM) transcriptional gene silencing (TGS) of endogenous repeated sequences, including transposable elements. The sequence is that of DNA-directed RNA polymerases II, IV and V subunit 3 (NRPB3) from Arabidopsis thaliana (Mouse-ear cress).